A 299-amino-acid chain; its full sequence is Tyrosine recombinase XerC (299 aa).

The Core-binding (CB) domain occupies 1 to 85 (MQADLDAFLD…ALRGFYRYLL (85 aa)). Positions 106 to 285 (RLPRTLDADR…DFQHLAAVYD (180 aa)) constitute a Tyr recombinase domain. Active-site residues include arginine 146, lysine 170, histidine 237, arginine 240, and histidine 263. Tyrosine 272 functions as the O-(3'-phospho-DNA)-tyrosine intermediate in the catalytic mechanism.

This sequence belongs to the 'phage' integrase family. XerC subfamily. Forms a cyclic heterotetrameric complex composed of two molecules of XerC and two molecules of XerD.

The protein resides in the cytoplasm. Its function is as follows. Site-specific tyrosine recombinase, which acts by catalyzing the cutting and rejoining of the recombining DNA molecules. The XerC-XerD complex is essential to convert dimers of the bacterial chromosome into monomers to permit their segregation at cell division. It also contributes to the segregational stability of plasmids. The chain is Tyrosine recombinase XerC from Azotobacter vinelandii (strain DJ / ATCC BAA-1303).